The sequence spans 425 residues: MAIGVGGCCAVLLAAALLFSSPATTYAYDSLDPNGNITIKWDVMQWTPDGYAAVVTLSNYQQFRHIQPPGWQLGWTWQQKEVIWSMYGAQAIEQGDCSMSKEGSNVPHSCKKHPTVVDLLPGAPIDLQIANCCKAGSLSAFSQDPANSAASFQIIVGHSGNSNETVRVPKNFSLMAPGPGYTCSRAMIVKPSRFLSPDGRRATQVLMTWNVICTYSQFLAQKVPSCCVSLSSFDNDKTVDCPTCSCGCRNEKSTTGKCVKKNAPDLQSIIHGPGRWTWQPLLQCTSHMCPVKINWHLMLKDKEHYRVKITVTNLNYRMNFTEWNLVVQYHPILDITQISGFNYKSIQVGKINDTTMLWGVKPYYDLLMQAGPLGNVQGELIVRKDFRASSTTNNNKGRAFPVRVYFNGDNCVMPPPDAYPVSITA.

Positions 1–27 (MAIGVGGCCAVLLAAALLFSSPATTYA) are cleaved as a signal peptide. N36, N163, N171, N319, and N352 each carry an N-linked (GlcNAc...) asparagine glycan.

It belongs to the COBRA family.

The sequence is that of COBRA-like protein 4 (BC1L9) from Oryza sativa subsp. japonica (Rice).